Here is a 526-residue protein sequence, read N- to C-terminus: Microphthalmia-associated transcription factor (526 aa).

The segment at 20-54 (EPKTYYELKSQPLKSSSSAEHSGASKPPLSSSTMT) is disordered. Over residues 34-44 (SSSSAEHSGAS) the composition is skewed to low complexity. Residue Ser-180 is modified to Phosphoserine; by MAPK. A Glycyl lysine isopeptide (Lys-Gly) (interchain with G-Cter in SUMO) cross-link involves residue Lys-289. Positions 311–364 (QKKDNHNLIERRRRFNINDRIKELGTLIPKSNDPDMRWNKGTILKASVDYIRKL) constitute a bHLH domain. Residues 355 to 401 (KASVDYIRKLQREQQRAKDLENRQKKLEHANRHLLLRVQELEMQARA) are a coiled coil. A leucine-zipper region spans residues 374 to 395 (LENRQKKLEHANRHLLLRVQEL). Ser-405 bears the Phosphoserine; by GSK3 mark. The residue at position 414 (Ser-414) is a Phosphoserine. Lys-423 is covalently cross-linked (Glycyl lysine isopeptide (Lys-Gly) (interchain with G-Cter in SUMO)). A Phosphoserine modification is found at Ser-491. A disordered region spans residues 496-526 (TDPLLSSVSPGASKTSSRRSSMSAEETEHAC). Positions 507–519 (ASKTSSRRSSMSA) are enriched in low complexity. Ser-516 is subject to Phosphoserine; by RPS6KA1.

It belongs to the MiT/TFE family. Homodimer or heterodimer; dimerization is mediated via the coiled coil region. Efficient DNA binding requires dimerization with another bHLH protein. Binds DNA in the form of homodimer or heterodimer with either TFE3, TFEB or TFEC. Identified in a complex with HINT1 and CTNNB1. Interacts with KARS1. Interacts with VSX2. In terms of processing, phosphorylation at Ser-405 significantly enhances the ability to bind the tyrosinase promoter. Phosphorylated at Ser-180 and Ser-516 following KIT signaling, triggering a short live activation: Phosphorylation at Ser-180 and Ser-516 by MAPK and RPS6KA1, respectively, activate the transcription factor activity but also promote ubiquitination and subsequent degradation by the proteasome. Phosphorylated in response to blue light (415nm). Post-translationally, ubiquitinated following phosphorylation at Ser-180, leading to subsequent degradation by the proteasome. Deubiquitinated by USP13, preventing its degradation.

It is found in the nucleus. It localises to the cytoplasm. In terms of biological role, transcription factor that regulates the expression of genes with essential roles in cell differentiation, proliferation and survival. Binds to M-boxes (5'-TCATGTG-3') and symmetrical DNA sequences (E-boxes) (5'-CACGTG-3') found in the promoters of target genes, such as BCL2 and tyrosinase (TYR). Plays an important role in melanocyte development by regulating the expression of tyrosinase (TYR) and tyrosinase-related protein 1 (TYRP1). Plays a critical role in the differentiation of various cell types, such as neural crest-derived melanocytes, mast cells, osteoclasts and optic cup-derived retinal pigment epithelium. This Rattus norvegicus (Rat) protein is Microphthalmia-associated transcription factor (Mitf).